We begin with the raw amino-acid sequence, 245 residues long: 8-amino-3,8-dideoxy-manno-octulosonate cytidylyltransferase (245 aa).

It belongs to the KdsB family.

The protein resides in the cytoplasm. It catalyses the reaction 8-amino-3,8-dideoxy-alpha-D-manno-octulosonate + CTP = CMP-8-amino-3,8-dideoxy-alpha-D-manno-oct-2-ulosonate + diphosphate. Its pathway is bacterial outer membrane biogenesis; lipopolysaccharide biosynthesis. Its function is as follows. Activates KDO8N (a required 8-carbon sugar) for incorporation into bacterial lipopolysaccharide in the Shewanella genus. The polypeptide is 8-amino-3,8-dideoxy-manno-octulosonate cytidylyltransferase (Shewanella frigidimarina (strain NCIMB 400)).